Here is a 118-residue protein sequence, read N- to C-terminus: Protein Rev (118 aa).

Residues Ser5 and Ser8 each carry the phosphoserine; by host CK2 modification. A homomultimerization region spans residues 18–28 (LIKFLYQSSSD). The disordered stretch occupies residues 23-52 (YQSSSDPPPNPGGTRQARRNRRRRWRERQR). A Nuclear localization signal and RNA-binding (RRE) motif is present at residues 36 to 52 (TRQARRNRRRRWRERQR). A compositionally biased stretch (basic residues) spans 38–49 (QARRNRRRRWRE). The short motif at 75–86 (LQLPPLERLTLD) is the Nuclear export signal and binding to XPO1 element. Positions 92–118 (GTSGTQGVGSPQILVESPTVLESGTKE) are disordered. Ser94 and Ser101 each carry phosphoserine; by host.

This sequence belongs to the HIV-1 REV protein family. As to quaternary structure, homomultimer; when bound to the RRE. Multimeric assembly is essential for activity and may involve XPO1. Binds to human KPNB1, XPO1, TNPO1, RANBP5 and IPO7. Interacts with the viral Integrase. Interacts with human KHDRBS1. Interacts with human NAP1; this interaction decreases Rev multimerization and stimulates its activity. Interacts with human DEAD-box helicases DDX3 and DDX24; these interactions may serve for viral RNA export to the cytoplasm and packaging, respectively. Interacts with human PSIP1; this interaction may inhibit HIV-1 DNA integration by promoting dissociation of the Integrase-LEDGF/p75 complex. Post-translationally, asymmetrically arginine dimethylated at one site by host PRMT6. Methylation impairs the RNA-binding activity and export of viral RNA from the nucleus to the cytoplasm. In terms of processing, phosphorylated by protein kinase CK2. Presence of, and maybe binding to the N-terminus of the regulatory beta subunit of CK2 is necessary for CK2-mediated Rev's phosphorylation.

The protein resides in the host nucleus. It is found in the host nucleolus. Its subcellular location is the host cytoplasm. Its function is as follows. Escorts unspliced or incompletely spliced viral pre-mRNAs (late transcripts) out of the nucleus of infected cells. These pre-mRNAs carry a recognition sequence called Rev responsive element (RRE) located in the env gene, that is not present in fully spliced viral mRNAs (early transcripts). This function is essential since most viral proteins are translated from unspliced or partially spliced pre-mRNAs which cannot exit the nucleus by the pathway used by fully processed cellular mRNAs. Rev itself is translated from a fully spliced mRNA that readily exits the nucleus. Rev's nuclear localization signal (NLS) binds directly to KPNB1/Importin beta-1 without previous binding to KPNA1/Importin alpha-1. KPNB1 binds to the GDP bound form of RAN (Ran-GDP) and targets Rev to the nucleus. In the nucleus, the conversion from Ran-GDP to Ran-GTP dissociates Rev from KPNB1 and allows Rev's binding to the RRE in viral pre-mRNAs. Rev multimerization on the RRE via cooperative assembly exposes its nuclear export signal (NES) to the surface. Rev can then form a complex with XPO1/CRM1 and Ran-GTP, leading to nuclear export of the complex. Conversion from Ran-GTP to Ran-GDP mediates dissociation of the Rev/RRE/XPO1/RAN complex, so that Rev can return to the nucleus for a subsequent round of export. Beside KPNB1, also seems to interact with TNPO1/Transportin-1, RANBP5/IPO5 and IPO7/RANBP7 for nuclear import. The nucleoporin-like HRB/RIP is an essential cofactor that probably indirectly interacts with Rev to release HIV RNAs from the perinuclear region to the cytoplasm. The chain is Protein Rev from Human immunodeficiency virus type 1 group M subtype B (isolate LW123) (HIV-1).